Consider the following 305-residue polypeptide: Sulfate adenylyltransferase subunit 2 (305 aa).

The protein belongs to the PAPS reductase family. CysD subfamily. Heterodimer composed of CysD, the smaller subunit, and CysN.

The catalysed reaction is sulfate + ATP + H(+) = adenosine 5'-phosphosulfate + diphosphate. It participates in sulfur metabolism; hydrogen sulfide biosynthesis; sulfite from sulfate: step 1/3. With CysN forms the ATP sulfurylase (ATPS) that catalyzes the adenylation of sulfate producing adenosine 5'-phosphosulfate (APS) and diphosphate, the first enzymatic step in sulfur assimilation pathway. APS synthesis involves the formation of a high-energy phosphoric-sulfuric acid anhydride bond driven by GTP hydrolysis by CysN coupled to ATP hydrolysis by CysD. This is Sulfate adenylyltransferase subunit 2 from Pseudomonas fluorescens (strain SBW25).